We begin with the raw amino-acid sequence, 320 residues long: MEKTAVLLVNLGTPSAPEPDAVRPYLAEFLGDWWVIDKPRWQWLPILHGIILRVRPPRVAKIYQKIWLPEGSPLLHYSRLQQAALQQRLEPEGIRVALGMTYGQPSVKSALEELRGWGVRRLLVLPLFPQYSSTTTAAVWSKVQKALDGWRDLPEQIFIRDFPTHPKYLAFLTERISGYIAEKGRPDALVLSYHSIPQAYTASGDDYAAQCESTTDAVRDRFPDLKIVMGYQSKFGNDPWLEPATDEVLRELVRTGHRHVAVMAPGFAADCIETLHELEVEYAEEFVKAGGERYDYLPAANDHPLFIDCLEDLVRRHLPR.

Residues His194 and Glu273 each contribute to the Fe(2+) site.

Belongs to the ferrochelatase family.

The protein localises to the cytoplasm. The enzyme catalyses Fe-coproporphyrin III + 2 H(+) = coproporphyrin III + Fe(2+). Its pathway is porphyrin-containing compound metabolism; protoheme biosynthesis. Its function is as follows. Involved in coproporphyrin-dependent heme b biosynthesis. Catalyzes the insertion of ferrous iron into coproporphyrin III to form Fe-coproporphyrin III. This chain is Coproporphyrin III ferrochelatase, found in Symbiobacterium thermophilum (strain DSM 24528 / JCM 14929 / IAM 14863 / T).